Consider the following 332-residue polypeptide: Holliday junction branch migration complex subunit RuvB (332 aa).

Residues 1–181 (MSRILDNEQM…FGITGHMEYY (181 aa)) form a large ATPase domain (RuvB-L) region. ATP contacts are provided by residues Leu-20, Arg-21, Gly-62, Lys-65, Thr-66, Thr-67, 128 to 130 (EDF), Arg-171, Tyr-181, and Arg-218. Position 66 (Thr-66) interacts with Mg(2+). The small ATPAse domain (RuvB-S) stretch occupies residues 182 to 252 (EEADLTEIVE…ITDQALSMLD (71 aa)). The interval 255-332 (HEGLDYVDQK…EHLGYEYMEK (78 aa)) is head domain (RuvB-H). Residues Arg-291, Arg-310, Arg-312, and Arg-315 each coordinate DNA.

The protein belongs to the RuvB family. In terms of assembly, homohexamer. Forms an RuvA(8)-RuvB(12)-Holliday junction (HJ) complex. HJ DNA is sandwiched between 2 RuvA tetramers; dsDNA enters through RuvA and exits via RuvB. An RuvB hexamer assembles on each DNA strand where it exits the tetramer. Each RuvB hexamer is contacted by two RuvA subunits (via domain III) on 2 adjacent RuvB subunits; this complex drives branch migration. In the full resolvosome a probable DNA-RuvA(4)-RuvB(12)-RuvC(2) complex forms which resolves the HJ.

It is found in the cytoplasm. It catalyses the reaction ATP + H2O = ADP + phosphate + H(+). Its function is as follows. The RuvA-RuvB-RuvC complex processes Holliday junction (HJ) DNA during genetic recombination and DNA repair, while the RuvA-RuvB complex plays an important role in the rescue of blocked DNA replication forks via replication fork reversal (RFR). RuvA specifically binds to HJ cruciform DNA, conferring on it an open structure. The RuvB hexamer acts as an ATP-dependent pump, pulling dsDNA into and through the RuvAB complex. RuvB forms 2 homohexamers on either side of HJ DNA bound by 1 or 2 RuvA tetramers; 4 subunits per hexamer contact DNA at a time. Coordinated motions by a converter formed by DNA-disengaged RuvB subunits stimulates ATP hydrolysis and nucleotide exchange. Immobilization of the converter enables RuvB to convert the ATP-contained energy into a lever motion, pulling 2 nucleotides of DNA out of the RuvA tetramer per ATP hydrolyzed, thus driving DNA branch migration. The RuvB motors rotate together with the DNA substrate, which together with the progressing nucleotide cycle form the mechanistic basis for DNA recombination by continuous HJ branch migration. Branch migration allows RuvC to scan DNA until it finds its consensus sequence, where it cleaves and resolves cruciform DNA. The protein is Holliday junction branch migration complex subunit RuvB of Streptococcus gordonii (strain Challis / ATCC 35105 / BCRC 15272 / CH1 / DL1 / V288).